The chain runs to 55 residues: ATP synthase F(0) complex subunit 8 (55 aa).

The chain crosses the membrane as a helical span at residues 10 to 30 (FPIMMLSWLIFSLIIQPKLLL). A disordered region spans residues 35–55 (NPPSNKTTTTTRSNPWTWPWT). Residues 37–55 (PSNKTTTTTRSNPWTWPWT) show a composition bias toward low complexity.

It belongs to the ATPase protein 8 family. In terms of assembly, component of the ATP synthase complex composed at least of ATP5F1A/subunit alpha, ATP5F1B/subunit beta, ATP5MC1/subunit c (homooctomer), MT-ATP6/subunit a, MT-ATP8/subunit 8, ATP5ME/subunit e, ATP5MF/subunit f, ATP5MG/subunit g, ATP5MK/subunit k, ATP5MJ/subunit j, ATP5F1C/subunit gamma, ATP5F1D/subunit delta, ATP5F1E/subunit epsilon, ATP5PF/subunit F6, ATP5PB/subunit b, ATP5PD/subunit d, ATP5PO/subunit OSCP. ATP synthase complex consists of a soluble F(1) head domain (subunits alpha(3) and beta(3)) - the catalytic core - and a membrane F(0) domain - the membrane proton channel (subunits c, a, 8, e, f, g, k and j). These two domains are linked by a central stalk (subunits gamma, delta, and epsilon) rotating inside the F1 region and a stationary peripheral stalk (subunits F6, b, d, and OSCP).

It localises to the mitochondrion membrane. Functionally, subunit 8, of the mitochondrial membrane ATP synthase complex (F(1)F(0) ATP synthase or Complex V) that produces ATP from ADP in the presence of a proton gradient across the membrane which is generated by electron transport complexes of the respiratory chain. ATP synthase complex consist of a soluble F(1) head domain - the catalytic core - and a membrane F(1) domain - the membrane proton channel. These two domains are linked by a central stalk rotating inside the F(1) region and a stationary peripheral stalk. During catalysis, ATP synthesis in the catalytic domain of F(1) is coupled via a rotary mechanism of the central stalk subunits to proton translocation. In vivo, can only synthesize ATP although its ATP hydrolase activity can be activated artificially in vitro. Part of the complex F(0) domain. This Opisthocomus hoazin (Hoatzin) protein is ATP synthase F(0) complex subunit 8.